We begin with the raw amino-acid sequence, 977 residues long: Receptor-like protein kinase 7 (977 aa).

The first 28 residues, methionine 1–serine 28, serve as a signal peptide directing secretion. The Extracellular segment spans residues aspartate 29–arginine 608. LRR repeat units follow at residues arginine 71–glutamate 95, isoleucine 96–asparagine 119, and threonine 121–glutamine 145. N-linked (GlcNAc...) asparagine glycans are attached at residues asparagine 73 and asparagine 119. Residues asparagine 152 and asparagine 167 are each glycosylated (N-linked (GlcNAc...) asparagine). 17 LRR repeats span residues alanine 168–leucine 194, lysine 195–leucine 218, threonine 219–leucine 242, asparagine 244–asparagine 265, lysine 267–leucine 289, threonine 290–glutamate 312, phenylalanine 313–leucine 337, aspartate 339–asparagine 361, glycine 362–cysteine 385, leucine 386–leucine 409, lysine 411–glycine 433, lysine 434–threonine 457, glutamate 458–leucine 481, lysine 482–cysteine 505, methionine 507–leucine 529, proline 530–leucine 553, and leucine 555–glycine 578. The N-linked (GlcNAc...) asparagine glycan is linked to asparagine 204. 2 N-linked (GlcNAc...) asparagine glycosylation sites follow: asparagine 252 and asparagine 268. An N-linked (GlcNAc...) asparagine glycan is attached at asparagine 318. Asparagine 373 and asparagine 399 each carry an N-linked (GlcNAc...) asparagine glycan. 2 N-linked (GlcNAc...) asparagine glycosylation sites follow: asparagine 536 and asparagine 577. Residues valine 609 to leucine 629 form a helical membrane-spanning segment. Residues tyrosine 630 to serine 977 are Cytoplasmic-facing. Positions isoleucine 666–arginine 959 constitute a Protein kinase domain. ATP-binding positions include isoleucine 672 to valine 680 and lysine 694. Aspartate 805 functions as the Proton acceptor in the catalytic mechanism.

It belongs to the protein kinase superfamily. Ser/Thr protein kinase family. Interacts with PIP1. As to expression, expressed in roots, stems and dry seeds. Expressed at junctions between organs, such as the insertion zones of stamens, petals and sepals, the transition zones of floral stem and pedicel, pedicel and silique, and floral stem and cauline leaves.

It is found in the membrane. The catalysed reaction is L-seryl-[protein] + ATP = O-phospho-L-seryl-[protein] + ADP + H(+). The enzyme catalyses L-threonyl-[protein] + ATP = O-phospho-L-threonyl-[protein] + ADP + H(+). Plays a role in pattern-triggered immunity (PTI) signaling induced by pathogen-associated molecular patterns (PAMPs). Acts as a receptor for PIP1 defense peptide. PIP1 is an endogenous secreted peptide that acts as elicitor of immune response and positive regulator of defense response. Involved in the control of seed germination speed, in tolerance to oxidative stress and in maintaining seed longevity. The polypeptide is Receptor-like protein kinase 7 (Arabidopsis thaliana (Mouse-ear cress)).